The following is a 354-amino-acid chain: Small ribosomal subunit biogenesis GTPase RsgA (354 aa).

Residues 1 to 46 (MSKKKPLSQGQLRRMRANHEKRLNRDSGDKNTPELQDSSLGPEQSG) are disordered. Over residues 17–32 (ANHEKRLNRDSGDKNT) the composition is skewed to basic and acidic residues. Over residues 33–46 (PELQDSSLGPEQSG) the composition is skewed to polar residues. Positions 108 to 276 (HSSLSRPDLY…LIDSPGVREF (169 aa)) constitute a CP-type G domain. Residues 164 to 167 (NKID) and 218 to 226 (GQSGVGKSS) each bind GTP. Zn(2+)-binding residues include C300, C305, H307, and C313.

The protein belongs to the TRAFAC class YlqF/YawG GTPase family. RsgA subfamily. Monomer. Associates with 30S ribosomal subunit, binds 16S rRNA. The cofactor is Zn(2+).

It is found in the cytoplasm. In terms of biological role, one of several proteins that assist in the late maturation steps of the functional core of the 30S ribosomal subunit. Helps release RbfA from mature subunits. May play a role in the assembly of ribosomal proteins into the subunit. Circularly permuted GTPase that catalyzes slow GTP hydrolysis, GTPase activity is stimulated by the 30S ribosomal subunit. The chain is Small ribosomal subunit biogenesis GTPase RsgA from Shewanella oneidensis (strain ATCC 700550 / JCM 31522 / CIP 106686 / LMG 19005 / NCIMB 14063 / MR-1).